A 281-amino-acid chain; its full sequence is uncharacterized protein (281 aa).

This is an uncharacterized protein from Mycoplasma genitalium (strain ATCC 33530 / DSM 19775 / NCTC 10195 / G37) (Mycoplasmoides genitalium).